Consider the following 366-residue polypeptide: Aminomethyltransferase (366 aa).

Belongs to the GcvT family. As to quaternary structure, the glycine cleavage system is composed of four proteins: P, T, L and H.

It carries out the reaction N(6)-[(R)-S(8)-aminomethyldihydrolipoyl]-L-lysyl-[protein] + (6S)-5,6,7,8-tetrahydrofolate = N(6)-[(R)-dihydrolipoyl]-L-lysyl-[protein] + (6R)-5,10-methylene-5,6,7,8-tetrahydrofolate + NH4(+). Its function is as follows. The glycine cleavage system catalyzes the degradation of glycine. The sequence is that of Aminomethyltransferase from Sodalis glossinidius (strain morsitans).